A 483-amino-acid polypeptide reads, in one-letter code: Regulatory protein ViaA (483 aa).

The protein belongs to the ViaA family. Homodimer. Interacts with RavA.

It is found in the cytoplasm. In terms of biological role, component of the RavA-ViaA chaperone complex, which may act on the membrane to optimize the function of some of the respiratory chains. ViaA stimulates the ATPase activity of RavA. The polypeptide is Regulatory protein ViaA (Cronobacter sakazakii (strain ATCC BAA-894) (Enterobacter sakazakii)).